The sequence spans 2319 residues: Coagulation factor VIII (2319 aa).

A signal peptide spans Met1 to Ser19. 2 consecutive Plastocyanin-like domains span residues Ala20–Cys199 and Glu207–Cys349. The region spanning Ala20 to Cys349 is the F5/8 type A 1 domain. Asn61 carries an N-linked (GlcNAc...) asparagine glycan. A disulfide bridge links Cys173 with Cys199. N-linked (GlcNAc...) asparagine glycosylation is found at Asn233 and Asn259. Tyr367 bears the Sulfotyrosine mark. Plastocyanin-like domains follow at residues Lys399–Cys573 and Asn583–Cys730. Residues Lys399–Cys730 enclose the F5/8 type A 2 domain. Asn423 is a glycosylation site (N-linked (GlcNAc...) asparagine). Cys547 and Cys573 are joined by a disulfide. Asn601 carries N-linked (GlcNAc...) asparagine glycosylation. Sulfotyrosine occurs at positions 737, 738, and 742. Residues Ser760–Arg1640 form a b region. N-linked (GlcNAc...) asparagine glycosylation is found at Asn880, Asn958, Asn1015, Asn1022, Asn1026, Asn1044, Asn1076, Asn1087, Asn1136, Asn1161, Asn1192, Asn1255, Asn1268, Asn1273, Asn1274, Asn1302, Asn1316, Asn1340, and Asn1378. Residues Trp1530–Asn1549 form a disordered region. The span at His1536 to Lys1548 shows a compositional bias: basic and acidic residues. 2 positions are modified to sulfotyrosine: Tyr1669 and Tyr1687. Plastocyanin-like domains lie at Lys1683–Cys1845 and Gly1855–Cys2008. One can recognise an F5/8 type A 3 domain in the interval Lys1683 to Cys2008. N-linked (GlcNAc...) asparagine glycosylation is present at Asn1797. Intrachain disulfides connect Cys1819/Cys1845, Cys2008/Cys2156, and Cys2161/Cys2313. 2 F5/8 type C domains span residues Cys2008 to Cys2156 and Cys2161 to Cys2313. N-linked (GlcNAc...) asparagine glycosylation is present at Asn2105.

It belongs to the multicopper oxidase family. In terms of assembly, interacts with vWF. vWF binding is essential for the stabilization of F8 in circulation. The binding of vWF and activation depend on the sulfation of Tyr-1669. Post-translationally, proteolytically cleaved by cathepsin CTSG to produce a partially activated form. As to expression, found in most tissues.

The protein resides in the secreted. It is found in the extracellular space. Its function is as follows. Factor VIII, along with calcium and phospholipid, acts as a cofactor for factor IXa when it converts factor X to the activated form, factor Xa. The polypeptide is Coagulation factor VIII (F8) (Mus musculus (Mouse)).